Consider the following 571-residue polypeptide: Putative pyruvate decarboxylase C13A11.06 (571 aa).

2 residues coordinate pyruvate: aspartate 29 and histidine 118. Residues threonine 395 and 418-420 each bind thiamine diphosphate; that span reads GSI. Position 450 (aspartate 450) interacts with Mg(2+). Residues 451-452 and 477-482 contribute to the thiamine diphosphate site; these read GS and NDGYTI. Mg(2+)-binding residues include asparagine 477 and glycine 479. Pyruvate is bound at residue glutamate 483.

Belongs to the TPP enzyme family. In terms of assembly, homotetramer. The cofactor is Mg(2+). Requires thiamine diphosphate as cofactor.

It catalyses the reaction a 2-oxocarboxylate + H(+) = an aldehyde + CO2. It carries out the reaction pyruvate + H(+) = acetaldehyde + CO2. In Schizosaccharomyces pombe (strain 972 / ATCC 24843) (Fission yeast), this protein is Putative pyruvate decarboxylase C13A11.06.